The chain runs to 230 residues: Cytochrome b6-f complex iron-sulfur subunit, chloroplastic (230 aa).

A chloroplast-targeting transit peptide spans methionine 1–glutamine 51. Residues leucine 73 to valine 93 form a helical membrane-spanning segment. One can recognise a Rieske domain in the interval alanine 116–phenylalanine 212. [2Fe-2S] cluster contacts are provided by cysteine 158, histidine 160, cysteine 176, and histidine 179. Cysteines 163 and 178 form a disulfide.

It belongs to the Rieske iron-sulfur protein family. As to quaternary structure, the 4 large subunits of the cytochrome b6-f complex are cytochrome b6, subunit IV (17 kDa polypeptide, petD), cytochrome f and the Rieske protein, while the 4 small subunits are petG, petL, petM and petN. The complex functions as a dimer. The cofactor is [2Fe-2S] cluster.

Its subcellular location is the plastid. It is found in the chloroplast thylakoid membrane. It carries out the reaction 2 oxidized [plastocyanin] + a plastoquinol + 2 H(+)(in) = 2 reduced [plastocyanin] + a plastoquinone + 4 H(+)(out). Component of the cytochrome b6-f complex, which mediates electron transfer between photosystem II (PSII) and photosystem I (PSI), cyclic electron flow around PSI, and state transitions. The polypeptide is Cytochrome b6-f complex iron-sulfur subunit, chloroplastic (petC) (Spinacia oleracea (Spinach)).